The sequence spans 689 residues: Acyl-coenzyme A oxidase 1 (689 aa).

T149 and G188 together coordinate FAD. E444 functions as the Proton acceptor in the catalytic mechanism.

The protein belongs to the acyl-CoA oxidase family. In terms of assembly, heteropentamer composed of five different subunits. Requires FAD as cofactor.

It localises to the peroxisome. The catalysed reaction is a 2,3-saturated acyl-CoA + O2 = a (2E)-enoyl-CoA + H2O2. The protein operates within lipid metabolism; peroxisomal fatty acid beta-oxidation. This Yarrowia lipolytica (strain CLIB 122 / E 150) (Yeast) protein is Acyl-coenzyme A oxidase 1 (POX1).